A 25-amino-acid chain; its full sequence is Insulin mimetic protein (25 aa).

The disordered stretch occupies residues 1–25 (TKDPELKQCKKQQKKQQQYDDDDKK).

Glycosylated. In terms of tissue distribution, expressed in seed.

This Cnidoscolus quercifolius protein is Insulin mimetic protein.